A 1028-amino-acid polypeptide reads, in one-letter code: U2 snRNP-associated SURP motif-containing protein (1028 aa).

Disordered regions lie at residues 1-111 and 141-272; these read MADK…EDEK and VNAA…DPST. A2 bears the N-acetylalanine mark. Residues 7-16 are compositionally biased toward polar residues; it reads GGSQKASSKT. Basic residues predominate over residues 45-54; that stretch reads TRPKSPRKHN. A compositionally biased stretch (basic and acidic residues) spans 55–64; the sequence is YRNESARESL. S67 is modified (phosphoserine). A Glycyl lysine isopeptide (Lys-Gly) (interchain with G-Cter in SUMO2) cross-link involves residue K80. Positions 92–121 form a coiled coil; that stretch reads AKRTLSKKEQEELKKKEDEKAAAEIYEEFL. Composition is skewed to basic and acidic residues over residues 97–111 and 144–155; these read SKKEQEELKKKEDEK and AKEEHETDEKRG. Glycyl lysine isopeptide (Lys-Gly) (interchain with G-Cter in SUMO2) cross-links involve residues K145 and K168. A compositionally biased stretch (polar residues) spans 169 to 178; the sequence is NPPNQSSNER. Positions 186–222 are enriched in basic and acidic residues; the sequence is ETKKPPLKKGEKEKKKSNLELFKEELKQIQEERDERH. Residues 192 to 232 adopt a coiled-coil conformation; that stretch reads LKKGEKEKKKSNLELFKEELKQIQEERDERHKTKGRLSRFE. At S202 the chain carries Phosphoserine. Residue K208 forms a Glycyl lysine isopeptide (Lys-Gly) (interchain with G-Cter in SUMO2) linkage. Phosphoserine is present on S236. Over residues 239 to 249 the composition is skewed to basic and acidic residues; it reads DGQRRSMDAPS. The RRM domain occupies 273 to 354; sequence TNLYLGNINP…FEMKLGWGKA (82 aa). The stretch at 429–472 is one SURP motif repeat; it reads LIHRMIEFVVREGPMFEAMIMNREINNPMFRFLFENQTPAHVYY. S484 carries the post-translational modification Phosphoserine. One can recognise a CID domain in the interval 533 to 678; it reads LKEEQRDKLE…KLQNIFLGLV (146 aa). The residue at position 718 (T718) is a Phosphothreonine. Glycyl lysine isopeptide (Lys-Gly) (interchain with G-Cter in SUMO2) cross-links involve residues K747 and K748. N6-acetyllysine; alternate is present on K759. K759 is covalently cross-linked (Glycyl lysine isopeptide (Lys-Gly) (interchain with G-Cter in SUMO2); alternate). 2 disordered regions span residues 777 to 840 and 854 to 1028; these read KWEL…EEKR and QDEL…KNKH. Residues 779-809 are a coiled coil; it reads ELFDQHEESEEEENQNQEEESEDEEDTQSSK. The span at 785–805 shows a compositional bias: acidic residues; the sequence is EESEEEENQNQEEESEDEEDT. Residues S787, S799, and S810 each carry the phosphoserine modification. 2 stretches are compositionally biased toward basic and acidic residues: residues 809–840 and 873–921; these read KSEEHHLYSNPIKEEMTESKFSKYSEMSEEKR and QVEH…TPTR. Residues K821, K828, and K831 each participate in a glycyl lysine isopeptide (Lys-Gly) (interchain with G-Cter in SUMO2) cross-link. A coiled-coil region spans residues 836 to 914; the sequence is SEEKRAKLRE…ESRSKDEKEK (79 aa). T930 bears the Phosphothreonine mark. A phosphoserine mark is found at S945 and S947. The segment covering 949–979 has biased composition (basic and acidic residues); sequence KSERSERSERSHKESSRSRSSHKDSPRDVSK. Basic residues predominate over residues 990–1028; that stretch reads TPKRSRRSRSRSPKKSGKKSRSQSRSPHRSHKKSKKNKH.

It belongs to the splicing factor SR family. As to quaternary structure, interacts with ERBB4.

It localises to the nucleus. The polypeptide is U2 snRNP-associated SURP motif-containing protein (U2SURP) (Pongo abelii (Sumatran orangutan)).